The primary structure comprises 1394 residues: Tubulin glycylase 3E (1394 aa).

Disordered regions lie at residues 201 to 230 (KKKS…QRKE), 563 to 582 (NQKD…QNSI), 620 to 663 (DENE…TSNF), and 682 to 706 (STVK…NLKE). Over residues 205 to 216 (NFQNKSQSQLNN) the composition is skewed to low complexity. Basic and acidic residues predominate over residues 217-230 (HKNEEKKPSQQRKE). Residues 568 to 582 (QSNQTSSVISQQNSI) are compositionally biased toward low complexity. Positions 627–655 (KENVLQQKKNQSNQIVTSQQQSNNYFKQE) are enriched in polar residues. Low complexity predominate over residues 682 to 703 (STVKNSDNNNQNQTNPQNQNTN). The region spanning 911–1250 (RFIFNITVIA…QNNLQEDLEI (340 aa)) is the TTL domain. ATP-binding positions include 1058-1061 (QKYI), Lys1079, and Asp1081. 2 IQ domains span residues 1320 to 1349 (QYWG…QKFT) and 1348 to 1377 (FTFA…QQQT).

The protein localises to the cell projection. Its subcellular location is the cilium. The protein resides in the cytoplasm. It is found in the cytoskeleton. It localises to the cilium axoneme. Functionally, probable glycylase which modifies tubulin, generating side chains of glycine on the gamma-carboxyl groups of specific glutamate residues within the C-terminal tail of tubulin. The polypeptide is Tubulin glycylase 3E (TTLL3E) (Tetrahymena thermophila (strain SB210)).